The primary structure comprises 440 residues: Thymidine phosphorylase (440 aa).

It belongs to the thymidine/pyrimidine-nucleoside phosphorylase family. As to quaternary structure, homodimer.

It catalyses the reaction thymidine + phosphate = 2-deoxy-alpha-D-ribose 1-phosphate + thymine. The protein operates within pyrimidine metabolism; dTMP biosynthesis via salvage pathway; dTMP from thymine: step 1/2. Its function is as follows. The enzymes which catalyze the reversible phosphorolysis of pyrimidine nucleosides are involved in the degradation of these compounds and in their utilization as carbon and energy sources, or in the rescue of pyrimidine bases for nucleotide synthesis. The polypeptide is Thymidine phosphorylase (Salmonella agona (strain SL483)).